The chain runs to 145 residues: 3-hydroxyacyl-[acyl-carrier-protein] dehydratase FabZ (145 aa).

Residue His47 is part of the active site.

It belongs to the thioester dehydratase family. FabZ subfamily.

It is found in the cytoplasm. It catalyses the reaction a (3R)-hydroxyacyl-[ACP] = a (2E)-enoyl-[ACP] + H2O. Functionally, involved in unsaturated fatty acids biosynthesis. Catalyzes the dehydration of short chain beta-hydroxyacyl-ACPs and long chain saturated and unsaturated beta-hydroxyacyl-ACPs. This is 3-hydroxyacyl-[acyl-carrier-protein] dehydratase FabZ from Polaromonas naphthalenivorans (strain CJ2).